A 382-amino-acid polypeptide reads, in one-letter code: MQDAAPRLTFTLRDEERLMMKIGVFVPIGNNGWLISTHAPQYMPTFELNKAIVQKAEHYHFDFALSMIKLRGFGGKTEFWDHNLESFTLMAGLAAVTSRIQIYATAATLTLPPAIVARMAATIDSISGGRFGVNLVTGWQKPEYEQMGIWPGDDYFSRRYDYLTEYVQVLRDLWGSGKSDFKGDFFTMDDCRVSPQPSVPMKVICAGQSDAGMAFSARYADFNFCFGKGVNTPTAFAPTAARMKQAAEQTGRDVGSYVLFMVIADETDDAARAKWEHYKAGADEEALSWLTEQSQKDTRSGTDTNVRQMADPTSAVNINMGTLVGSYASVARMLDEVANVPGAEGVLLTFDDFLSGIETFGERIQPLMQCRAHLPALTQEVA.

FMN contacts are provided by residues 68-69 (IK), Asn134, Glu143, 159-160 (RY), and Ser209.

The protein belongs to the NtaA/SnaA/DszA monooxygenase family. RutA subfamily.

It catalyses the reaction uracil + FMNH2 + NADH + O2 = (Z)-3-ureidoacrylate + FMN + NAD(+) + H2O + H(+). The enzyme catalyses thymine + FMNH2 + NADH + O2 = (Z)-2-methylureidoacrylate + FMN + NAD(+) + H2O + H(+). Its function is as follows. Catalyzes the pyrimidine ring opening between N-3 and C-4 by an unusual flavin hydroperoxide-catalyzed mechanism, adding oxygen atoms in the process to yield ureidoacrylate peracid, that immediately reacts with FMN forming ureidoacrylate and FMN-N(5)-oxide. The FMN-N(5)-oxide reacts spontaneously with NADH to produce FMN. Requires the flavin reductase RutF to regenerate FMN in vivo. The polypeptide is Pyrimidine monooxygenase RutA (Escherichia coli O150:H5 (strain SE15)).